A 594-amino-acid chain; its full sequence is Alanine--tRNA ligase (594 aa).

Positions 456, 460, 558, and 562 each coordinate Zn(2+).

This sequence belongs to the class-II aminoacyl-tRNA synthetase family. Zn(2+) serves as cofactor.

It localises to the cytoplasm. The catalysed reaction is tRNA(Ala) + L-alanine + ATP = L-alanyl-tRNA(Ala) + AMP + diphosphate. Its function is as follows. Catalyzes the attachment of alanine to tRNA(Ala) in a two-step reaction: alanine is first activated by ATP to form Ala-AMP and then transferred to the acceptor end of tRNA(Ala). Also edits incorrectly charged Ser-tRNA(Ala) and Gly-tRNA(Ala) via its editing domain. This chain is Alanine--tRNA ligase (alaS), found in Borrelia garinii subsp. bavariensis (strain ATCC BAA-2496 / DSM 23469 / PBi) (Borreliella bavariensis).